Consider the following 577-residue polypeptide: MAAARLAASLLLLAAQVACEFGVLRVVPQSGGTRGRDYCILYNPQWAHLPHDLNKVSLLKLRDLSTTQLCSHLDVPVEDFTNQIALVARGNCTFYEKVRLAQGSGAHGLLIVSKERLVPPRGNKTQYEEISIPVALLSHRDLQDIFRRFGHEVMVALYAPSEPVMDYNMVIIFIMAVGTVALGGYWAGSHDVKKYMKHKRDDVPEKQEDEAVDVTPVMICVFVVMCCFMLVLLYYFYDRLVYVIIGIFCLASSTGLYSCLAPCVRKLPFCTCRVPDNNLPYFHKRPQARMLLLALFCVTVSVVWGVFRNEDQWAWVLQDTLGIAFCLYMLRTIRLPTFKACTLLLLVLFVYDIFFVFITPYLTKSGNSIMVEVATGPSNSSTHEKLPMVLKVPRLNTSPLSLCDRPFSLLGFGDILVPGLLVAYCHRFDIQVQSSRIYFVACTIAYGLGLLVTFVALVLMRHGQPALLYLVPCTLLTSCTVALWRREMGAFWTGSGFADAPQTPWAAPQGPVPPKDVDASLSEQPRGEELAQSPLATEEAGATDPAKDPDSPVAGPLSPSNGDQVQPIPVVTPGTSA.

An N-terminal signal peptide occupies residues 1-19 (MAAARLAASLLLLAAQVAC). Over 20–168 (EFGVLRVVPQ…APSEPVMDYN (149 aa)) the chain is Lumenal. One can recognise a PA domain in the interval 49-149 (LPHDLNKVSL…RDLQDIFRRF (101 aa)). A glycan (N-linked (GlcNAc...) asparagine) is linked at Asn91. A helical membrane pass occupies residues 169-189 (MVIIFIMAVGTVALGGYWAGS). The Cytoplasmic segment spans residues 190-216 (HDVKKYMKHKRDDVPEKQEDEAVDVTP). Residues 217-237 (VMICVFVVMCCFMLVLLYYFY) traverse the membrane as a helical segment. The Lumenal segment spans residues 238–239 (DR). Residues 240-260 (LVYVIIGIFCLASSTGLYSCL) traverse the membrane as a helical segment. The Cytoplasmic segment spans residues 261–286 (APCVRKLPFCTCRVPDNNLPYFHKRP). Residues 287 to 307 (QARMLLLALFCVTVSVVWGVF) traverse the membrane as a helical segment. The Lumenal portion of the chain corresponds to 308-312 (RNEDQ). Residues 313–333 (WAWVLQDTLGIAFCLYMLRTI) traverse the membrane as a helical segment. Residues 334-341 (RLPTFKAC) are Cytoplasmic-facing. A helical membrane pass occupies residues 342-362 (TLLLLVLFVYDIFFVFITPYL). Asp352 is an active-site residue. Residues 363–405 (TKSGNSIMVEVATGPSNSSTHEKLPMVLKVPRLNTSPLSLCDR) lie on the Lumenal side of the membrane. Residues 406-426 (PFSLLGFGDILVPGLLVAYCH) form a helical membrane-spanning segment. Asp414 is a catalytic residue. Topologically, residues 427–438 (RFDIQVQSSRIY) are cytoplasmic. The chain crosses the membrane as a helical span at residues 439-459 (FVACTIAYGLGLLVTFVALVL). The Lumenal portion of the chain corresponds to 460–463 (MRHG). The helical transmembrane segment at 464-484 (QPALLYLVPCTLLTSCTVALW) threads the bilayer. The PAL signature appears at 465 to 467 (PAL). The Cytoplasmic segment spans residues 485–577 (RREMGAFWTG…IPVVTPGTSA (93 aa)). The interval 502-577 (QTPWAAPQGP…IPVVTPGTSA (76 aa)) is disordered.

The protein belongs to the peptidase A22B family. As to quaternary structure, monomer. Homodimer. Interacts with ITM2B and TNF. In terms of processing, glycosylated.

The protein localises to the cell membrane. It is found in the golgi apparatus membrane. The protein resides in the lysosome membrane. Its subcellular location is the endosome membrane. It localises to the membrane. Its function is as follows. Intramembrane-cleaving aspartic protease (I-CLiP) that cleaves type II membrane signal peptides in the hydrophobic plane of the membrane. Functions in ITM2B and TNF processing. Catalyzes the intramembrane cleavage of the anchored fragment of shed TNF-alpha (TNF), which promotes the release of the intracellular domain (ICD) for signaling to the nucleus. May play a role in the regulation of innate and adaptive immunity. This Rattus norvegicus (Rat) protein is Signal peptide peptidase-like 2B.